Consider the following 182-residue polypeptide: Peptidyl-prolyl cis-trans isomerase H (182 aa).

Positions 15–181 constitute a PPIase cyclophilin-type domain; the sequence is FFDITLGGEP…LDVVIAQCGE (167 aa).

It belongs to the cyclophilin-type PPIase family. PPIase H subfamily.

It localises to the nucleus. It carries out the reaction [protein]-peptidylproline (omega=180) = [protein]-peptidylproline (omega=0). Its function is as follows. PPIases accelerate the folding of proteins. It catalyzes the cis-trans isomerization of proline imidic peptide bonds in oligopeptides. This Neurospora crassa (strain ATCC 24698 / 74-OR23-1A / CBS 708.71 / DSM 1257 / FGSC 987) protein is Peptidyl-prolyl cis-trans isomerase H (cyp-3).